A 216-amino-acid chain; its full sequence is Large ribosomal subunit protein bL25 (216 aa).

Residues 184–216 (VPPTSDVEEEEGDEDLEEDVEETAAEEEEGVEE) form a disordered region. The span at 189 to 216 (DVEEEEGDEDLEEDVEETAAEEEEGVEE) shows a compositional bias: acidic residues.

The protein belongs to the bacterial ribosomal protein bL25 family. CTC subfamily. Part of the 50S ribosomal subunit; part of the 5S rRNA/L5/L18/L25 subcomplex. Contacts the 5S rRNA. Binds to the 5S rRNA independently of L5 and L18.

Its function is as follows. This is one of the proteins that binds to the 5S RNA in the ribosome where it forms part of the central protuberance. The sequence is that of Large ribosomal subunit protein bL25 from Desulforapulum autotrophicum (strain ATCC 43914 / DSM 3382 / VKM B-1955 / HRM2) (Desulfobacterium autotrophicum).